A 92-amino-acid polypeptide reads, in one-letter code: Bombyxin A-1 (92 aa).

Residues 1-19 (MKILLAIALMLSTVMWVST) form the signal peptide. A Pyrrolidone carboxylic acid modification is found at Gln-20. 3 cysteine pairs are disulfide-bonded: Cys-29/Cys-79, Cys-41/Cys-92, and Cys-78/Cys-83. Positions 50–70 (SGAQFASYGSAWLMPYSEGRG) are cleaved as a propeptide — c peptide like.

Belongs to the insulin family. In terms of assembly, heterodimer of a B chain and an A chain linked by two disulfide bonds.

Its subcellular location is the secreted. Functionally, brain peptide responsible for activation of prothoracic glands to produce ecdysone in insects. This Bombyx mori (Silk moth) protein is Bombyxin A-1 (BBXA1).